The primary structure comprises 426 residues: D-tagatose-1,6-bisphosphate aldolase subunit KbaZ (426 aa).

This sequence belongs to the GatZ/KbaZ family. KbaZ subfamily. As to quaternary structure, forms a complex with KbaY.

It functions in the pathway carbohydrate metabolism; D-tagatose 6-phosphate degradation; D-glyceraldehyde 3-phosphate and glycerone phosphate from D-tagatose 6-phosphate: step 2/2. Functionally, component of the tagatose-1,6-bisphosphate aldolase KbaYZ that is required for full activity and stability of the Y subunit. Could have a chaperone-like function for the proper and stable folding of KbaY. When expressed alone, KbaZ does not show any aldolase activity. This is D-tagatose-1,6-bisphosphate aldolase subunit KbaZ from Escherichia coli O1:K1 / APEC.